Reading from the N-terminus, the 635-residue chain is DNA-directed RNA polymerase subunit gamma (635 aa).

Zn(2+) contacts are provided by cysteine 74, cysteine 76, cysteine 89, and cysteine 92. Mg(2+)-binding residues include aspartate 471, aspartate 473, and aspartate 475.

This sequence belongs to the RNA polymerase beta' chain family. RpoC1 subfamily. In cyanobacteria the RNAP catalytic core is composed of 2 alpha, 1 beta, 1 beta', 1 gamma and 1 omega subunit. When a sigma factor is associated with the core the holoenzyme is formed, which can initiate transcription. Requires Mg(2+) as cofactor. Zn(2+) serves as cofactor.

The catalysed reaction is RNA(n) + a ribonucleoside 5'-triphosphate = RNA(n+1) + diphosphate. Its function is as follows. DNA-dependent RNA polymerase catalyzes the transcription of DNA into RNA using the four ribonucleoside triphosphates as substrates. The sequence is that of DNA-directed RNA polymerase subunit gamma from Prochlorococcus marinus (strain NATL2A).